Here is a 393-residue protein sequence, read N- to C-terminus: Putative competence-damage inducible protein (393 aa).

The protein belongs to the CinA family.

The polypeptide is Putative competence-damage inducible protein (Streptococcus suis (strain 05ZYH33)).